The chain runs to 519 residues: Membrane-bound lytic murein transglycosylase F (519 aa).

An N-terminal signal peptide occupies residues 1–32; that stretch reads MKKLKLNYLLIGVVTLLLAVALWPAIPWSGKA. The non-LT domain stretch occupies residues 33-269; that stretch reads DNRIAAIQAR…RLEEKYLGHG (237 aa). The LT domain stretch occupies residues 270–519; sequence NDFDYVDTRS…PNTLSPVSPR (250 aa). E314 is an active-site residue. Residues 495–519 form a disordered region; sequence PFSQAGAGGKTHSALPNTLSPVSPR. The segment covering 508-519 has biased composition (polar residues); the sequence is ALPNTLSPVSPR.

This sequence in the N-terminal section; belongs to the bacterial solute-binding protein 3 family. It in the C-terminal section; belongs to the transglycosylase Slt family.

Its subcellular location is the cell outer membrane. It carries out the reaction Exolytic cleavage of the (1-&gt;4)-beta-glycosidic linkage between N-acetylmuramic acid (MurNAc) and N-acetylglucosamine (GlcNAc) residues in peptidoglycan, from either the reducing or the non-reducing ends of the peptidoglycan chains, with concomitant formation of a 1,6-anhydrobond in the MurNAc residue.. Functionally, murein-degrading enzyme that degrades murein glycan strands and insoluble, high-molecular weight murein sacculi, with the concomitant formation of a 1,6-anhydromuramoyl product. Lytic transglycosylases (LTs) play an integral role in the metabolism of the peptidoglycan (PG) sacculus. Their lytic action creates space within the PG sacculus to allow for its expansion as well as for the insertion of various structures such as secretion systems and flagella. This Cronobacter sakazakii (strain ATCC BAA-894) (Enterobacter sakazakii) protein is Membrane-bound lytic murein transglycosylase F.